We begin with the raw amino-acid sequence, 262 residues long: Type III pantothenate kinase (262 aa).

9 to 16 contributes to the ATP binding site; the sequence is DIGNTNVK. Substrate-binding positions include Tyr-103 and 110–113; that span reads GADR. Asp-112 serves as the catalytic Proton acceptor. Asp-134 contacts K(+). Thr-137 provides a ligand contact to ATP. Thr-190 provides a ligand contact to substrate.

It belongs to the type III pantothenate kinase family. Homodimer. The cofactor is NH4(+). It depends on K(+) as a cofactor.

Its subcellular location is the cytoplasm. The catalysed reaction is (R)-pantothenate + ATP = (R)-4'-phosphopantothenate + ADP + H(+). Its pathway is cofactor biosynthesis; coenzyme A biosynthesis; CoA from (R)-pantothenate: step 1/5. Functionally, catalyzes the phosphorylation of pantothenate (Pan), the first step in CoA biosynthesis. This chain is Type III pantothenate kinase, found in Nitratidesulfovibrio vulgaris (strain ATCC 29579 / DSM 644 / CCUG 34227 / NCIMB 8303 / VKM B-1760 / Hildenborough) (Desulfovibrio vulgaris).